A 560-amino-acid chain; its full sequence is Dihydroxy-acid dehydratase (560 aa).

Position 78 (D78) interacts with Mg(2+). [2Fe-2S] cluster is bound at residue C119. Mg(2+)-binding residues include D120 and K121. K121 is subject to N6-carboxylysine. Position 192 (C192) interacts with [2Fe-2S] cluster. E446 lines the Mg(2+) pocket. Catalysis depends on S472, which acts as the Proton acceptor.

Belongs to the IlvD/Edd family. Homodimer. [2Fe-2S] cluster serves as cofactor. The cofactor is Mg(2+).

The enzyme catalyses (2R)-2,3-dihydroxy-3-methylbutanoate = 3-methyl-2-oxobutanoate + H2O. It catalyses the reaction (2R,3R)-2,3-dihydroxy-3-methylpentanoate = (S)-3-methyl-2-oxopentanoate + H2O. It participates in amino-acid biosynthesis; L-isoleucine biosynthesis; L-isoleucine from 2-oxobutanoate: step 3/4. It functions in the pathway amino-acid biosynthesis; L-valine biosynthesis; L-valine from pyruvate: step 3/4. In terms of biological role, functions in the biosynthesis of branched-chain amino acids. Catalyzes the dehydration of (2R,3R)-2,3-dihydroxy-3-methylpentanoate (2,3-dihydroxy-3-methylvalerate) into 2-oxo-3-methylpentanoate (2-oxo-3-methylvalerate) and of (2R)-2,3-dihydroxy-3-methylbutanoate (2,3-dihydroxyisovalerate) into 2-oxo-3-methylbutanoate (2-oxoisovalerate), the penultimate precursor to L-isoleucine and L-valine, respectively. This is Dihydroxy-acid dehydratase from Anaeromyxobacter dehalogenans (strain 2CP-C).